The following is a 148-amino-acid chain: Nucleoside diphosphate kinase (148 aa).

6 residues coordinate ATP: Lys9, Phe57, Arg85, Thr91, Arg102, and Asn112. His115 serves as the catalytic Pros-phosphohistidine intermediate.

It belongs to the NDK family. Mg(2+) is required as a cofactor.

It carries out the reaction a 2'-deoxyribonucleoside 5'-diphosphate + ATP = a 2'-deoxyribonucleoside 5'-triphosphate + ADP. It catalyses the reaction a ribonucleoside 5'-diphosphate + ATP = a ribonucleoside 5'-triphosphate + ADP. Functionally, major role in the synthesis of nucleoside triphosphates other than ATP. The ATP gamma phosphate is transferred to the NDP beta phosphate via a ping-pong mechanism, using a phosphorylated active-site intermediate. The sequence is that of Nucleoside diphosphate kinase from Helianthus annuus (Common sunflower).